A 229-amino-acid chain; its full sequence is UPF0173 metal-dependent hydrolase Hbut_0886 (229 aa).

This sequence belongs to the UPF0173 family.

The protein is UPF0173 metal-dependent hydrolase Hbut_0886 of Hyperthermus butylicus (strain DSM 5456 / JCM 9403 / PLM1-5).